The sequence spans 543 residues: Protein P78/83 (543 aa).

Disordered regions lie at residues 147–222 (QALP…QPAA), 235–325 (RNEK…SLSN), and 373–400 (MAKS…ANTP). Over residues 182–221 (AAPPPPPSPVPNIPAPPPPPPPSMSELPPAPPMPTEPQPA) the composition is skewed to pro residues. One can recognise a WH2 domain in the interval 226 to 246 (DRQQLLEAIRNEKNRTRLRPV). The span at 271–321 (PKPPSASPPPPPPPPPPPAPPAPPPMVDLSSAPPPPPLVDLPSEMLPPPAP) shows a compositional bias: pro residues. A compositionally biased stretch (polar residues) spans 375–384 (KSSSEATSND).

Forms a complex with proteins C42 and E27. Interacts with host actin-related protein 2/3 complex. Interacts with protein Ac102.

The protein localises to the host cytoplasm. Its subcellular location is the host nucleus. Plays a role in the transport of the nucleocapsids from the cytoplasm toward the host nucleus together with the host actin-polymerizing Arp2/3 complex. In Lepidoptera (butterflies and moths), this protein is Protein P78/83 (P61).